The chain runs to 176 residues: N-alpha-acetyltransferase NAT5 (176 aa).

The 163-residue stretch at 14 to 176 folds into the N-acetyltransferase domain; sequence NNLGMLTKLA…DAILLKKHIS (163 aa).

Belongs to the acetyltransferase family. As to quaternary structure, component of the N-terminal acetyltransferase A (NatA) complex, which is composed of ARD1, NAT1 and NAT5.

The protein localises to the cytoplasm. The enzyme catalyses N-terminal L-methionyl-L-alanyl-[protein] + acetyl-CoA = N-terminal N(alpha)-acetyl-L-methionyl-L-alanyl-[protein] + CoA + H(+). It catalyses the reaction N-terminal L-methionyl-L-seryl-[protein] + acetyl-CoA = N-terminal N(alpha)-acetyl-L-methionyl-L-seryl-[protein] + CoA + H(+). The catalysed reaction is N-terminal L-methionyl-L-valyl-[protein] + acetyl-CoA = N-terminal N(alpha)-acetyl-L-methionyl-L-valyl-[protein] + CoA + H(+). It carries out the reaction N-terminal L-methionyl-L-threonyl-[protein] + acetyl-CoA = N-terminal N(alpha)-acetyl-L-methionyl-L-threonyl-[protein] + CoA + H(+). The enzyme catalyses N-terminal L-methionyl-L-lysyl-[protein] + acetyl-CoA = N-terminal N(alpha)-acetyl-L-methionyl-L-lysyl-[protein] + CoA + H(+). It catalyses the reaction N-terminal L-methionyl-L-leucyl-[protein] + acetyl-CoA = N-terminal N(alpha)-acetyl-L-methionyl-L-leucyl-[protein] + CoA + H(+). The catalysed reaction is N-terminal L-methionyl-L-phenylalanyl-[protein] + acetyl-CoA = N-terminal N(alpha)-acetyl-L-methionyl-L-phenylalanyl-[protein] + CoA + H(+). It carries out the reaction N-terminal L-methionyl-L-tyrosyl-[protein] + acetyl-CoA = N-terminal N(alpha)-acetyl-L-methionyl-L-tyrosyl-[protein] + CoA + H(+). Its function is as follows. N-alpha-acetyltransferase that acetylates the N-terminus of proteins that retain their initiating methionine. Has a broad substrate specificity: able to acetylate the initiator methionine of most peptides. Non-essential component of the NatA N-terminal acetyltransferase. The chain is N-alpha-acetyltransferase NAT5 from Saccharomyces cerevisiae (strain ATCC 204508 / S288c) (Baker's yeast).